Consider the following 376-residue polypeptide: Alpha-2,8-sialyltransferase 8E (376 aa).

Topologically, residues 1-17 (MRYADPSANRDLLGSRT) are cytoplasmic. A helical; Signal-anchor for type II membrane protein membrane pass occupies residues 18–38 (LLFIFICAFALVTLLQQILYG). The Lumenal segment spans residues 39 to 376 (RNYIKRYFEF…RVHTGTCSCC (338 aa)). Asparagine 56 and asparagine 96 each carry an N-linked (GlcNAc...) asparagine glycan. Cystine bridges form between cysteine 164-cysteine 313 and cysteine 178-cysteine 373. Substrate is bound by residues asparagine 192 and 214–216 (NPS). N-linked (GlcNAc...) asparagine glycosylation is found at asparagine 241 and asparagine 284. Position 300 to 302 (300 to 302 (STG)) interacts with substrate. Histidine 348 functions as the Proton donor/acceptor in the catalytic mechanism.

It belongs to the glycosyltransferase 29 family. Expressed in fetal and adult brain, adult heart and skeletal muscle. In terms of tissue distribution, expressed in fetal and adult brain, not detected in adult heart and skeletal muscle.

The protein localises to the golgi apparatus membrane. It carries out the reaction a ganglioside GT1b (d18:1(4E)) + CMP-N-acetyl-beta-neuraminate = a ganglioside GQ1b (d18:1(4E)) + CMP + H(+). It catalyses the reaction a ganglioside GD3 (d18:1(4E)) + CMP-N-acetyl-beta-neuraminate = a ganglioside GT3 (d18:1(4E)) + CMP + H(+). The catalysed reaction is a ganglioside GD1a (d18:1(4E)) + CMP-N-acetyl-beta-neuraminate = a ganglioside GT1a (d18:1(4E)) + CMP + H(+). The enzyme catalyses a ganglioside GM1b (d18:1(4E)) + CMP-N-acetyl-beta-neuraminate = a ganglioside GD1c (d18:1(4E)) + CMP + H(+). It carries out the reaction a ganglioside GQ1c (d18:1(4E)) + CMP-N-acetyl-beta-neuraminate = a ganglioside GP1c (d18:1(4E)) + CMP + H(+). Its pathway is protein modification; protein glycosylation. Involved in the synthesis of gangliosides GD1c, GT1a, GQ1b, GP1c and GT3 from GD1a, GT1b, GM1b and GD3 respectively. The polypeptide is Alpha-2,8-sialyltransferase 8E (Homo sapiens (Human)).